A 473-amino-acid polypeptide reads, in one-letter code: Lactate utilization protein B (473 aa).

4Fe-4S ferredoxin-type domains are found at residues 302-332 and 351-380; these read GSEF…GHSY and YNDY…LHDL. [4Fe-4S] cluster is bound by residues Cys-311, Cys-314, Cys-317, Cys-321, Cys-364, Cys-367, and Cys-371.

It belongs to the LutB/YkgF family.

Is involved in L-lactate degradation and allows cells to grow with lactate as the sole carbon source. Has probably a role as an electron transporter during oxidation of L-lactate. The protein is Lactate utilization protein B of Bacillus cereus (strain AH820).